Here is an 827-residue protein sequence, read N- to C-terminus: Tuftelin-interacting protein 11 (827 aa).

Disordered regions lie at residues 31–129 and 179–203; these read FNPH…KGFV and QRKG…DFPV. The span at 41–60 shows a compositional bias: basic and acidic residues; that stretch reads TKEEATYGVWAERDSDEERP. The span at 88–98 shows a compositional bias: acidic residues; sequence DVSDEDSDEDE. A compositionally biased stretch (basic and acidic residues) spans 99-112; it reads KPVKQEEIPKEFVP. One can recognise a G-patch domain in the interval 145–191; that stretch reads TKGIGQKLLQKMGYVPGRGLGKNAQGIINPIEAKQRKGKGAVGAYGS.

Belongs to the TFP11/STIP family. In terms of assembly, identified in the spliceosome C complex.

The protein localises to the nucleus. Involved in pre-mRNA splicing, specifically in spliceosome disassembly during late-stage splicing events. The sequence is that of Tuftelin-interacting protein 11 (TFIP11) from Gallus gallus (Chicken).